The sequence spans 156 residues: Small ribosomal subunit protein uS7 (156 aa).

Belongs to the universal ribosomal protein uS7 family. In terms of assembly, part of the 30S ribosomal subunit. Contacts proteins S9 and S11.

In terms of biological role, one of the primary rRNA binding proteins, it binds directly to 16S rRNA where it nucleates assembly of the head domain of the 30S subunit. Is located at the subunit interface close to the decoding center, probably blocks exit of the E-site tRNA. The polypeptide is Small ribosomal subunit protein uS7 (Alcanivorax borkumensis (strain ATCC 700651 / DSM 11573 / NCIMB 13689 / SK2)).